Here is a 164-residue protein sequence, read N- to C-terminus: Two-component response regulator ARR16 (164 aa).

Positions H30–M160 constitute a Response regulatory domain. Residue D93 is modified to 4-aspartylphosphate.

The protein belongs to the ARR family. Type-A subfamily. Two-component system major event consists of a His-to-Asp phosphorelay between a sensor histidine kinase (HK) and a response regulator (RR). In plants, the His-to-Asp phosphorelay involves an additional intermediate named Histidine-containing phosphotransfer protein (HPt). This multistep phosphorelay consists of a His-Asp-His-Asp sequential transfer of a phosphate group between first a His and an Asp of the HK protein, followed by the transfer to a conserved His of the HPt protein and finally the transfer to an Asp in the receiver domain of the RR protein.

The protein resides in the nucleus. Its function is as follows. Functions as a response regulator involved in His-to-Asp phosphorelay signal transduction system. Phosphorylation of the Asp residue in the receiver domain activates the ability of the protein to promote the transcription of target genes. Type-A response regulators seem to act as negative regulators of the cytokinin signaling. The chain is Two-component response regulator ARR16 (ARR16) from Arabidopsis thaliana (Mouse-ear cress).